Here is a 397-residue protein sequence, read N- to C-terminus: Decapping and exoribonuclease protein (397 aa).

Substrate is bound by residues Arg-58, Glu-101, and 131–133 (WRG). Glu-192 serves as a coordination point for Mg(2+). Residues Cys-217 and Glu-234 each coordinate substrate. Mg(2+) contacts are provided by Glu-234, Asp-236, Glu-253, and Leu-254. Residues Lys-255 and Gln-280 each contribute to the substrate site. Thr-392 carries the post-translational modification Phosphothreonine. A Phosphoserine modification is found at Ser-394.

This sequence belongs to the DXO/Dom3Z family. Mg(2+) is required as a cofactor.

It is found in the nucleus. The catalysed reaction is a 5'-end triphospho-ribonucleoside in mRNA + H2O = a 5'-end phospho-ribonucleoside in mRNA + diphosphate + H(+). The enzyme catalyses a 5'-end NAD(+)-phospho-ribonucleoside in mRNA + H2O = a 5'-end phospho-ribonucleoside in mRNA + NAD(+) + H(+). It carries out the reaction a 5'-end NAD(+)-phospho-ribonucleoside in snoRNA + H2O = a 5'-end phospho-ribonucleoside in snoRNA + NAD(+) + H(+). It catalyses the reaction a 5'-end (N(7)-methyl 5'-triphosphoguanosine)-ribonucleoside-ribonucleotide in mRNA + H2O = a (N(7)-methyl 5'-triphosphoguanosine)-nucleoside + a 5'-end phospho-ribonucleoside in mRNA + H(+). The catalysed reaction is a 5'-end FAD-phospho-ribonucleoside in mRNA + H2O = a 5'-end phospho-ribonucleoside in mRNA + FAD + H(+). The enzyme catalyses a 5'-end CoA-ribonucleoside in mRNA + H2O = 3'-dephospho-CoA + a 5'-end phospho-ribonucleoside in mRNA + H(+). Functionally, decapping enzyme for NAD-capped RNAs: specifically hydrolyzes the nicotinamide adenine dinucleotide (NAD) cap from a subset of RNAs by removing the entire NAD moiety from the 5'-end of an NAD-capped RNA. The NAD-cap is present at the 5'-end of some RNAs and snoRNAs. In contrast to the canonical 5'-end N7 methylguanosine (m7G) cap, the NAD cap promotes mRNA decay. Preferentially acts on NAD-capped transcripts in response to environmental stress. Also acts as a non-canonical decapping enzyme that removes the entire cap structure of m7G capped or incompletely capped RNAs and mediates their subsequent degradation. Specifically degrades pre-mRNAs with a defective 5'-end m7G cap and is part of a pre-mRNA capping quality control. Has decapping activity toward incomplete 5'-end m7G cap mRNAs such as unmethylated 5'-end-capped RNA (cap0), while it has no activity toward 2'-O-ribose methylated m7G cap (cap1). In contrast to canonical decapping enzymes DCP2 and NUDT16, which cleave the cap within the triphosphate linkage, the decapping activity releases the entire cap structure GpppN and a 5'-end monophosphate RNA. Also has 5'-3' exoribonuclease activities: The 5'-end monophosphate RNA is then degraded by the 5'-3' exoribonuclease activity, enabling this enzyme to decap and degrade incompletely capped mRNAs. Also possesses RNA 5'-pyrophosphohydrolase activity by hydrolyzing the 5'-end triphosphate to release pyrophosphates. Exhibits decapping activity towards FAD-capped RNAs. Exhibits decapping activity towards dpCoA-capped RNAs in vitro. This is Decapping and exoribonuclease protein from Rattus norvegicus (Rat).